The following is a 297-amino-acid chain: HTH-type transcriptional regulator ArgP (297 aa).

The region spanning 4–60 (PDYRTLQALDAVIRERGFERAAQKLCITQSAVSQRIKQLENMFGQPLLVRTVPPRPT) is the HTH lysR-type domain. A DNA-binding region (H-T-H motif) is located at residues 21 to 40 (FERAAQKLCITQSAVSQRIK).

Belongs to the LysR transcriptional regulatory family. Homodimer.

Functionally, controls the transcription of genes involved in arginine and lysine metabolism. This Klebsiella pneumoniae subsp. pneumoniae (strain ATCC 700721 / MGH 78578) protein is HTH-type transcriptional regulator ArgP.